The primary structure comprises 542 residues: CTP synthase (542 aa).

The tract at residues 1–265 (MARYVFITGG…DSEVLAAFGI (265 aa)) is amidoligase domain. Serine 13 lines the CTP pocket. Serine 13 is a UTP binding site. An ATP-binding site is contributed by 14 to 19 (SLGKGI). Residue tyrosine 54 participates in L-glutamine binding. Aspartate 71 contributes to the ATP binding site. Positions 71 and 139 each coordinate Mg(2+). Residues 146–148 (DIE), 186–191 (KTKPTQ), and lysine 222 each bind CTP. UTP is bound by residues 186–191 (KTKPTQ) and lysine 222. A Glutamine amidotransferase type-1 domain is found at 291-541 (TIAIVGKYTG…IAAAVEQSRL (251 aa)). Position 353 (glycine 353) interacts with L-glutamine. The active-site Nucleophile; for glutamine hydrolysis is the cysteine 380. L-glutamine is bound by residues 381 to 384 (FGMQ), glutamate 404, and arginine 469. Active-site residues include histidine 514 and glutamate 516.

The protein belongs to the CTP synthase family. In terms of assembly, homotetramer.

The catalysed reaction is UTP + L-glutamine + ATP + H2O = CTP + L-glutamate + ADP + phosphate + 2 H(+). It catalyses the reaction L-glutamine + H2O = L-glutamate + NH4(+). It carries out the reaction UTP + NH4(+) + ATP = CTP + ADP + phosphate + 2 H(+). It functions in the pathway pyrimidine metabolism; CTP biosynthesis via de novo pathway; CTP from UDP: step 2/2. Allosterically activated by GTP, when glutamine is the substrate; GTP has no effect on the reaction when ammonia is the substrate. The allosteric effector GTP functions by stabilizing the protein conformation that binds the tetrahedral intermediate(s) formed during glutamine hydrolysis. Inhibited by the product CTP, via allosteric rather than competitive inhibition. Functionally, catalyzes the ATP-dependent amination of UTP to CTP with either L-glutamine or ammonia as the source of nitrogen. Regulates intracellular CTP levels through interactions with the four ribonucleotide triphosphates. This chain is CTP synthase, found in Chelativorans sp. (strain BNC1).